We begin with the raw amino-acid sequence, 683 residues long: PTS system mannose-specific EIIBCA component (683 aa).

The 89-residue stretch at 1–89 (MASKLTTTSQ…LKLDGMKHFA (89 aa)) folds into the PTS EIIB type-1 domain. Cys28 serves as the catalytic Phosphocysteine intermediate; for EIIB activity. The 360-residue stretch at 117-476 (EFLSDTFRPI…NEERDEARAK (360 aa)) folds into the PTS EIIC type-1 domain. Helical transmembrane passes span 126–146 (ILWA…ADTF), 162–182 (YVFL…MVGA), 193–213 (WIGA…LGSA), 225–245 (VLND…GLYW), 260–280 (MVFV…FLLG), 303–323 (FILS…GLHW), 344–364 (PMGA…LLSI), 376–396 (LGGM…YGVL), 409–429 (GCLA…AFVF), and 442–462 (LGYT…VLAL). Residues 550–654 (DPIFAAGKLG…PLITPVVVSN (105 aa)) enclose the PTS EIIA type-1 domain. His602 acts as the Tele-phosphohistidine intermediate; for EIIA activity in catalysis.

The protein localises to the cell membrane. It carries out the reaction D-mannose(out) + N(pros)-phospho-L-histidyl-[protein] = D-mannose 6-phosphate(in) + L-histidyl-[protein]. Functionally, the phosphoenolpyruvate-dependent sugar phosphotransferase system (sugar PTS), a major carbohydrate active -transport system, catalyzes the phosphorylation of incoming sugar substrates concomitantly with their translocation across the cell membrane. This system is involved in mannose transport. The protein is PTS system mannose-specific EIIBCA component (ptsM) of Corynebacterium glutamicum (strain ATCC 13032 / DSM 20300 / JCM 1318 / BCRC 11384 / CCUG 27702 / LMG 3730 / NBRC 12168 / NCIMB 10025 / NRRL B-2784 / 534).